The chain runs to 463 residues: Glutamate--tRNA ligase 1 (463 aa).

The short motif at 11-21 (PSPTGYLHIGG) is the 'HIGH' region element. A 'KMSKS' region motif is present at residues 240–244 (KLSKR). Lysine 243 provides a ligand contact to ATP.

It belongs to the class-I aminoacyl-tRNA synthetase family. Glutamate--tRNA ligase type 1 subfamily. Monomer.

It is found in the cytoplasm. The enzyme catalyses tRNA(Glu) + L-glutamate + ATP = L-glutamyl-tRNA(Glu) + AMP + diphosphate. Its function is as follows. Catalyzes the attachment of glutamate to tRNA(Glu) in a two-step reaction: glutamate is first activated by ATP to form Glu-AMP and then transferred to the acceptor end of tRNA(Glu). The sequence is that of Glutamate--tRNA ligase 1 from Campylobacter jejuni subsp. doylei (strain ATCC BAA-1458 / RM4099 / 269.97).